The following is a 126-amino-acid chain: Glycine cleavage system H protein (126 aa).

Positions 21 to 103 (TVTVGISDHA…YESGWIARIK (83 aa)) constitute a Lipoyl-binding domain. Lys62 is modified (N6-lipoyllysine).

It belongs to the GcvH family. In terms of assembly, the glycine cleavage system is composed of four proteins: P, T, L and H. It depends on (R)-lipoate as a cofactor.

The glycine cleavage system catalyzes the degradation of glycine. The H protein shuttles the methylamine group of glycine from the P protein to the T protein. The sequence is that of Glycine cleavage system H protein from Aliivibrio fischeri (strain MJ11) (Vibrio fischeri).